The primary structure comprises 268 residues: Eukaryotic translation initiation factor 3 subunit J (268 aa).

Disordered stretches follow at residues 1 to 117 (MTPS…DLKH) and 219 to 242 (NEKM…KTKV). Residues 26–44 (DEEDEEVLDSWDAAEDSEV) show a composition bias toward acidic residues. The stretch at 40-95 (EDSEVEREKAAKAAEAKAKAEAEAAAKKKSKAQRIEEHKAERRKNAEADSEEDEDE) forms a coiled coil. Basic and acidic residues-rich tracts occupy residues 45 to 65 (EREK…EAAA) and 72 to 86 (QRIE…KNAE). Over residues 87–99 (ADSEEDEDEDEDE) the composition is skewed to acidic residues. Basic and acidic residues-rich tracts occupy residues 100-117 (AEKR…DLKH) and 220-232 (EKMR…DKGS).

The protein belongs to the eIF-3 subunit J family. In terms of assembly, component of the eukaryotic translation initiation factor 3 (eIF-3) complex.

It localises to the cytoplasm. Component of the eukaryotic translation initiation factor 3 (eIF-3) complex, which is involved in protein synthesis of a specialized repertoire of mRNAs and, together with other initiation factors, stimulates binding of mRNA and methionyl-tRNAi to the 40S ribosome. The eIF-3 complex specifically targets and initiates translation of a subset of mRNAs involved in cell proliferation. In Aspergillus clavatus (strain ATCC 1007 / CBS 513.65 / DSM 816 / NCTC 3887 / NRRL 1 / QM 1276 / 107), this protein is Eukaryotic translation initiation factor 3 subunit J (hcr1).